The chain runs to 322 residues: uncharacterized protein (322 aa).

Residues 1–63 (MFKIRKRSVP…DEASSSDSHY (63 aa)) are disordered. The segment covering 34–49 (FVDDHGKPIAEYRDFP) has biased composition (basic and acidic residues). The segment at 245–274 (WKVDRICTYYINRPDKCTRGDNCRFKHDDV) adopts a C3H1-type zinc-finger fold. The tract at residues 278–322 (HRQKEIQSSRNQSWHHRTSSHKYSSENSDHRGYRRHRSRSPHARQ) is disordered. Over residues 309–322 (GYRRHRSRSPHARQ) the composition is skewed to basic residues.

This is an uncharacterized protein from Caenorhabditis elegans.